A 507-amino-acid polypeptide reads, in one-letter code: ATP synthase subunit alpha, mitochondrial (507 aa).

171–178 contacts ATP; it reads GDRQTGKT.

It belongs to the ATPase alpha/beta chains family. In terms of assembly, F-type ATPases have 2 components, CF(1) - the catalytic core - and CF(0) - the membrane proton channel. CF(1) has five subunits: alpha(3), beta(3), gamma(1), delta(1), epsilon(1). CF(0) has three main subunits: a, b and c.

It localises to the mitochondrion. The protein resides in the mitochondrion inner membrane. Mitochondrial membrane ATP synthase (F(1)F(0) ATP synthase or Complex V) produces ATP from ADP in the presence of a proton gradient across the membrane which is generated by electron transport complexes of the respiratory chain. F-type ATPases consist of two structural domains, F(1) - containing the extramembraneous catalytic core, and F(0) - containing the membrane proton channel, linked together by a central stalk and a peripheral stalk. During catalysis, ATP synthesis in the catalytic domain of F(1) is coupled via a rotary mechanism of the central stalk subunits to proton translocation. Subunits alpha and beta form the catalytic core in F(1). Rotation of the central stalk against the surrounding alpha(3)beta(3) subunits leads to hydrolysis of ATP in three separate catalytic sites on the beta subunits. Subunit alpha does not bear the catalytic high-affinity ATP-binding sites. This Arabidopsis thaliana (Mouse-ear cress) protein is ATP synthase subunit alpha, mitochondrial (ATPA).